The chain runs to 171 residues: Protein GrpE (171 aa).

The segment at 1–22 (MNHEQPDIESQQSAADAAATAG) is disordered.

Belongs to the GrpE family. As to quaternary structure, homodimer.

The protein resides in the cytoplasm. Its function is as follows. Participates actively in the response to hyperosmotic and heat shock by preventing the aggregation of stress-denatured proteins, in association with DnaK and GrpE. It is the nucleotide exchange factor for DnaK and may function as a thermosensor. Unfolded proteins bind initially to DnaJ; upon interaction with the DnaJ-bound protein, DnaK hydrolyzes its bound ATP, resulting in the formation of a stable complex. GrpE releases ADP from DnaK; ATP binding to DnaK triggers the release of the substrate protein, thus completing the reaction cycle. Several rounds of ATP-dependent interactions between DnaJ, DnaK and GrpE are required for fully efficient folding. The chain is Protein GrpE from Stenotrophomonas maltophilia (strain K279a).